The chain runs to 342 residues: Isopentenyl-diphosphate delta-isomerase (342 aa).

A substrate-binding site is contributed by 6 to 7 (RK). FMN-binding positions include Ser63, 64–66 (SMT), Ser94, and Asn122. 94–96 (SMR) contributes to the substrate binding site. Substrate is bound at residue Gln157. Position 158 (Glu158) interacts with Mg(2+). FMN contacts are provided by residues Lys189, Thr219, 269 to 271 (GLK), and 290 to 291 (AG).

It belongs to the IPP isomerase type 2 family. As to quaternary structure, homooctamer. Dimer of tetramers. Requires FMN as cofactor. The cofactor is NADPH. It depends on Mg(2+) as a cofactor.

The protein resides in the cytoplasm. It carries out the reaction isopentenyl diphosphate = dimethylallyl diphosphate. Functionally, involved in the biosynthesis of isoprenoids. Catalyzes the 1,3-allylic rearrangement of the homoallylic substrate isopentenyl (IPP) to its allylic isomer, dimethylallyl diphosphate (DMAPP). This is Isopentenyl-diphosphate delta-isomerase from Rickettsia bellii (strain RML369-C).